A 689-amino-acid chain; its full sequence is DNA-directed RNA polymerase subunit beta' (689 aa).

Positions 69, 71, 87, and 90 each coordinate Zn(2+). Asp489, Asp491, and Asp493 together coordinate Mg(2+).

This sequence belongs to the RNA polymerase beta' chain family. RpoC1 subfamily. In terms of assembly, in plastids the minimal PEP RNA polymerase catalytic core is composed of four subunits: alpha, beta, beta', and beta''. When a (nuclear-encoded) sigma factor is associated with the core the holoenzyme is formed, which can initiate transcription. Mg(2+) is required as a cofactor. Zn(2+) serves as cofactor.

It is found in the plastid. Its subcellular location is the chloroplast. The enzyme catalyses RNA(n) + a ribonucleoside 5'-triphosphate = RNA(n+1) + diphosphate. DNA-dependent RNA polymerase catalyzes the transcription of DNA into RNA using the four ribonucleoside triphosphates as substrates. The chain is DNA-directed RNA polymerase subunit beta' from Lactuca sativa (Garden lettuce).